The sequence spans 352 residues: Speedy protein E16 (352 aa).

Residues 1 to 90 are disordered; it reads MDRTETRFRK…EPEKELAPEP (90 aa). Residues 18 to 40 show a composition bias toward polar residues; it reads ITTSRQPHPQNEQSPQRSTSGYS. The segment covering 76-90 has biased composition (acidic residues); it reads DESEEEPEKELAPEP.

The protein belongs to the Speedy/Ringo family.

This Homo sapiens (Human) protein is Speedy protein E16.